The primary structure comprises 277 residues: Large ribosomal subunit protein uL2 (277 aa).

The tract at residues 215-277 (GIRPTVRGSV…KLIVKRRNDK (63 aa)) is disordered. Positions 264–277 (KYSDKLIVKRRNDK) are enriched in basic and acidic residues.

This sequence belongs to the universal ribosomal protein uL2 family. As to quaternary structure, part of the 50S ribosomal subunit. Forms a bridge to the 30S subunit in the 70S ribosome.

In terms of biological role, one of the primary rRNA binding proteins. Required for association of the 30S and 50S subunits to form the 70S ribosome, for tRNA binding and peptide bond formation. It has been suggested to have peptidyltransferase activity; this is somewhat controversial. Makes several contacts with the 16S rRNA in the 70S ribosome. The sequence is that of Large ribosomal subunit protein uL2 from Clostridium acetobutylicum (strain ATCC 824 / DSM 792 / JCM 1419 / IAM 19013 / LMG 5710 / NBRC 13948 / NRRL B-527 / VKM B-1787 / 2291 / W).